We begin with the raw amino-acid sequence, 63 residues long: DNA-directed RNA polymerase 7 kDa subunit (63 aa).

This sequence belongs to the poxviridae DNA-directed RNA polymerase 7 kDa subunit family. In terms of assembly, the DNA-dependent RNA polymerase used for intermediate and late genes expression consists of eight subunits 147 kDa, 133 kDa, 35 kDa, 30 kDa, 22 kDa, 19 kDa, 18 kDa and 7 kDa totalling more than 500 kDa in mass. The same holoenzyme, with the addition of the transcription-specificity factor RAP94, is used for early gene expression.

The protein resides in the virion. It carries out the reaction RNA(n) + a ribonucleoside 5'-triphosphate = RNA(n+1) + diphosphate. Functionally, part of the DNA-dependent RNA polymerase which catalyzes the transcription of viral DNA into RNA using the four ribonucleoside triphosphates as substrates. Responsible for the transcription of early, intermediate and late genes. DNA-dependent RNA polymerase associates with the early transcription factor (ETF) thereby allowing the early genes transcription. Late transcription, and probably also intermediate transcription, require newly synthesized RNA polymerase. This chain is DNA-directed RNA polymerase 7 kDa subunit (RPO7), found in Molluscum contagiosum virus subtype 1 (MOCV).